Consider the following 223-residue polypeptide: Small ribosomal subunit protein uS3 (223 aa).

The 70-residue stretch at 39–108 (IRNFVKKNSY…NILINIVEVK (70 aa)) folds into the KH type-2 domain.

This sequence belongs to the universal ribosomal protein uS3 family. In terms of assembly, part of the 30S ribosomal subunit. Forms a tight complex with proteins S10 and S14.

In terms of biological role, binds the lower part of the 30S subunit head. Binds mRNA in the 70S ribosome, positioning it for translation. In Clostridium botulinum (strain Okra / Type B1), this protein is Small ribosomal subunit protein uS3.